The chain runs to 174 residues: Peptide methionine sulfoxide reductase MsrA (174 aa).

The active site involves C10.

It belongs to the MsrA Met sulfoxide reductase family.

It carries out the reaction L-methionyl-[protein] + [thioredoxin]-disulfide + H2O = L-methionyl-(S)-S-oxide-[protein] + [thioredoxin]-dithiol. The catalysed reaction is [thioredoxin]-disulfide + L-methionine + H2O = L-methionine (S)-S-oxide + [thioredoxin]-dithiol. Functionally, has an important function as a repair enzyme for proteins that have been inactivated by oxidation. Catalyzes the reversible oxidation-reduction of methionine sulfoxide in proteins to methionine. This chain is Peptide methionine sulfoxide reductase MsrA, found in Acinetobacter baumannii (strain SDF).